A 469-amino-acid polypeptide reads, in one-letter code: MSMSRGTLFDKVWEQHTVATLPSGQTQLFIGLHLIHEVTSPQAFAMLRERGLPVLYPQRTIATVDHIVPTDTLARPLQDALAEEMLQALEANCRAHNIPFFGIGSGRQGIVHVIAPEQGLTQPGMTIACGDSHTSTHGAFGAIAFGIGTSQVRDVLATQTLALNKLKVRKVEVNGSLAAGVYAKDVILHVIRHLGVKGGVGYAYEFAGTTFGQLSMEERMTVCNMAIEGGARCGYVNPDETTFAYLKGRPFAPQGKAWDEAVAWWRSLASDADAEYDDVVTFAAADIAPTVTWGITPGQSVAVDETLPTLESLPVAERAIAAEAYAYMDLQPGQPIQGTKIDVCFIGSCTNGRISDLRQAAKVVEGRKVKPGVKAFVVPGSERVKAQAEAEGLDVVFKAAGFEWRNPGCSMCLAMNPDKLQGRQISASSSNRNFKGRQGSPSGRTLLMSPAMVAAAAIAGEVTDVRAFL.

3 residues coordinate [4Fe-4S] cluster: C349, C409, and C412. Positions 424–443 (QISASSSNRNFKGRQGSPSG) are disordered.

The protein belongs to the aconitase/IPM isomerase family. LeuC type 1 subfamily. Heterodimer of LeuC and LeuD. It depends on [4Fe-4S] cluster as a cofactor.

The catalysed reaction is (2R,3S)-3-isopropylmalate = (2S)-2-isopropylmalate. It functions in the pathway amino-acid biosynthesis; L-leucine biosynthesis; L-leucine from 3-methyl-2-oxobutanoate: step 2/4. In terms of biological role, catalyzes the isomerization between 2-isopropylmalate and 3-isopropylmalate, via the formation of 2-isopropylmaleate. The sequence is that of 3-isopropylmalate dehydratase large subunit from Thermosynechococcus vestitus (strain NIES-2133 / IAM M-273 / BP-1).